A 412-amino-acid chain; its full sequence is Subtilisin-like protease 6 (412 aa).

An N-terminal signal peptide occupies residues 1–20 (MGFITKAIPIVLAALSTVNG). A propeptide spanning residues 21–127 (ARILEAGPHA…VRATTNGTNL (107 aa)) is cleaved from the precursor. The 85-residue stretch at 36–120 (KYIVVMKKDV…FIEPDFVVRA (85 aa)) folds into the Inhibitor I9 domain. One can recognise a Peptidase S8 domain in the interval 135 to 412 (SWGLARVSTR…SKLIYNGSGK (278 aa)). Catalysis depends on charge relay system residues Asp-167 and His-198. N-linked (GlcNAc...) asparagine glycans are attached at residues Asn-252, Asn-264, and Asn-325. Ser-358 (charge relay system) is an active-site residue. An N-linked (GlcNAc...) asparagine glycan is attached at Asn-408.

The protein belongs to the peptidase S8 family.

Its subcellular location is the secreted. In terms of biological role, secreted subtilisin-like serine protease with keratinolytic activity that contributes to pathogenicity. The sequence is that of Subtilisin-like protease 6 (SUB6) from Trichophyton verrucosum (strain HKI 0517).